Reading from the N-terminus, the 274-residue chain is MIEIKKAKPTSPGRRHVVSVKNTELHTGKPFKGLVEVKKSKAGRNNTGRITVRHQGGGHKQHYRIVDFKRNKDDIVARVERIEYDPNRSANIALVLYADGERRYIIAPKGLKKDMSVVSGEKVDVAVGNCMPLRNIPLGTVIHNIEMKPKKGAQMIRSAGTFAQLVGKDNAYAIIRLRSGEMRRVLLDCRAVIGVVSNSEHNLKSLGKAGAKRWRGIRPTVRGVAMNPVDHPHGGGEGRTSGGRHPVTPWGIPTKGYKTRKNKRSNKLIVQKRK.

The segment at 224–274 (VAMNPVDHPHGGGEGRTSGGRHPVTPWGIPTKGYKTRKNKRSNKLIVQKRK) is disordered. The segment covering 257–274 (YKTRKNKRSNKLIVQKRK) has biased composition (basic residues).

It belongs to the universal ribosomal protein uL2 family. Part of the 50S ribosomal subunit. Forms a bridge to the 30S subunit in the 70S ribosome.

Functionally, one of the primary rRNA binding proteins. Required for association of the 30S and 50S subunits to form the 70S ribosome, for tRNA binding and peptide bond formation. It has been suggested to have peptidyltransferase activity; this is somewhat controversial. Makes several contacts with the 16S rRNA in the 70S ribosome. The polypeptide is Large ribosomal subunit protein uL2 (Francisella philomiragia subsp. philomiragia (strain ATCC 25017 / CCUG 19701 / FSC 153 / O#319-036)).